A 384-amino-acid chain; its full sequence is Anhydro-N-acetylmuramic acid kinase (384 aa).

12 to 19 (GTSLDGVD) is a binding site for ATP.

It belongs to the anhydro-N-acetylmuramic acid kinase family.

It catalyses the reaction 1,6-anhydro-N-acetyl-beta-muramate + ATP + H2O = N-acetyl-D-muramate 6-phosphate + ADP + H(+). It functions in the pathway amino-sugar metabolism; 1,6-anhydro-N-acetylmuramate degradation. It participates in cell wall biogenesis; peptidoglycan recycling. Catalyzes the specific phosphorylation of 1,6-anhydro-N-acetylmuramic acid (anhMurNAc) with the simultaneous cleavage of the 1,6-anhydro ring, generating MurNAc-6-P. Is required for the utilization of anhMurNAc either imported from the medium or derived from its own cell wall murein, and thus plays a role in cell wall recycling. The protein is Anhydro-N-acetylmuramic acid kinase of Cronobacter sakazakii (strain ATCC BAA-894) (Enterobacter sakazakii).